A 346-amino-acid chain; its full sequence is L-glyceraldehyde 3-phosphate reductase (346 aa).

Residues Trp33, Asp61, Tyr66, Ser168, Gln193, Thr223, Leu225, Gln227, Lys233, Ser303, Gln307, and Asn311 each coordinate NADP(+).

The protein belongs to the shaker potassium channel beta subunit family. In terms of assembly, homotetramer. Homooctamer.

It carries out the reaction a primary alcohol + NADP(+) = an aldehyde + NADPH + H(+). The catalysed reaction is hydroxyacetone + NADP(+) = methylglyoxal + NADPH + H(+). Its function is as follows. Aldo-keto reductase that catalyzes the stereospecific, NADPH-dependent reduction of L-glyceraldehyde 3-phosphate (L-GAP) to L-glycerol 3-phosphate (L-G3P). The physiological role of Gpr is the detoxification of L-GAP, which may be formed via non-enzymatic and/or enzymatic racemization of D-GAP. Also contributes to cellular methylglyoxal detoxification by catalyzing the NADPH-dependent conversion of methylglyoxal to acetol. However, the catalytic efficiency of methylglyoxal reductase activity is more than 2 orders of magnitude lower than the L-GAP reductase activity. In addition, exhibits activity with glyoxal and probably plays a significant role in detoxification of glyoxal in vivo. Shows broad specificity and can use aromatic aldehydes such as 4-nitrobenzaldehyde and benzaldehyde, D,L-glyceraldehyde, phenylglyoxal, isatin and the model substrate 4-nitrobenzaldehyde. The protein is L-glyceraldehyde 3-phosphate reductase of Escherichia coli (strain K12).